The sequence spans 479 residues: Adenosylhomocysteinase (479 aa).

Threonine 65, aspartate 144, and glutamate 204 together coordinate substrate. An NAD(+)-binding site is contributed by 205–207; the sequence is TTT. Substrate is bound by residues lysine 234 and aspartate 238. NAD(+) is bound by residues asparagine 239, 268–273, glutamate 291, asparagine 326, 347–349, and asparagine 392; these read GYGDVG and IGH.

The protein belongs to the adenosylhomocysteinase family. Requires NAD(+) as cofactor.

The protein localises to the cytoplasm. The enzyme catalyses S-adenosyl-L-homocysteine + H2O = L-homocysteine + adenosine. It participates in amino-acid biosynthesis; L-homocysteine biosynthesis; L-homocysteine from S-adenosyl-L-homocysteine: step 1/1. Functionally, may play a key role in the regulation of the intracellular concentration of adenosylhomocysteine. The protein is Adenosylhomocysteinase of Variovorax paradoxus (strain S110).